Here is a 501-residue protein sequence, read N- to C-terminus: Zinc finger and SCAN domain-containing protein 12 (501 aa).

Residues Lys20 and Lys26 each participate in a glycyl lysine isopeptide (Lys-Gly) (interchain with G-Cter in SUMO2) cross-link. The region spanning 51 to 132 (QFCYQETSGP…DLERELDELG (82 aa)) is the SCAN box domain. The interval 175-194 (REAQEEQVSGVETGNEPRNV) is disordered. Over residues 180–194 (EQVSGVETGNEPRNV) the composition is skewed to polar residues. Lys197 participates in a covalent cross-link: Glycyl lysine isopeptide (Lys-Gly) (interchain with G-Cter in SUMO2). The interval 223 to 255 (EAHNPGEESSGISHEDSQPLRNENGVNSPANSE) is disordered. Residues 241 to 253 (PLRNENGVNSPAN) are compositionally biased toward polar residues. 6 C2H2-type zinc fingers span residues 269 to 291 (HGCD…KRVH), 297 to 319 (YKCE…KVVH), 325 to 347 (YKCN…QRLH), 353 to 375 (YHCN…LKSH), 381 to 403 (YQCL…QGVH), and 409 to 431 (YECN…QETH). Residues 429-450 (ETHHKEKPFTQSGPIQQQRNHT) form a disordered region. Positions 437-447 (FTQSGPIQQQR) are enriched in polar residues. The C2H2-type 7 zinc finger occupies 455 to 477 (YKCSVCGKAFIQKISLIEHEQIH). The segment at 483–501 (YKCAEGGKAFIQMSELTEH) adopts a C2H2-type 8; degenerate zinc-finger fold.

Belongs to the krueppel C2H2-type zinc-finger protein family. In terms of tissue distribution, testis specific.

It is found in the nucleus. May be involved in transcriptional regulation. The chain is Zinc finger and SCAN domain-containing protein 12 (Zscan12) from Mus musculus (Mouse).